Here is a 598-residue protein sequence, read N- to C-terminus: Nuclear receptor subfamily 4 group A member 1 (598 aa).

Disordered stretches follow at residues 1–50 and 120–159; these read MPCI…PTAL and LDET…GSFG. Composition is skewed to low complexity over residues 37–50 and 134–145; these read LASP…PTAL and SPCSAPSPSTPS. The segment at 171–466 is required for nuclear import; that stretch reads RAWTEQLPKA…PAEGKLIFCS (296 aa). The segment at residues 264–339 is a DNA-binding region (nuclear receptor); it reads EGRCAVCGDN…VGMVKEVVRT (76 aa). 2 consecutive NR C4-type zinc fingers follow at residues 267-287 and 303-327; these read CAVC…CEGC and CLAN…FQKC. Residues 268-354 are required for binding NBRE-containing DNA; that stretch reads AVCGDNASCQ…RRGRLPSKPK (87 aa). The required for the interaction with RXRA stretch occupies residues 299-361; that stretch reads AKYICLANKD…KPKQPPDASP (63 aa). Ser341 carries the phosphoserine; by PKA modification. Positions 341–361 are disordered; it reads SLKGRRGRLPSKPKQPPDASP. Ser351 carries the phosphoserine; by PKA, RPS6KA1 and RPS6KA3 modification. Residues 360 to 595 form the NR LBD domain; sequence SPANLLTSLV…PIVDKIFMDT (236 aa). Residues 521 to 544 are binds lipopolysaccharide; sequence PRRVEELQNRIASCLKEHVSAVAG. The tract at residues 584–595 is AF-2; sequence PPPIVDKIFMDT.

It belongs to the nuclear hormone receptor family. NR4 subfamily. As to quaternary structure, binds the NGFI-B response element (NBRE) as a monomer. Binds the Nur response element (NurRE), consisting of two inverse NBRE-related octanucleotide repeats separated by 6 base-pairs, as a dimer. Interacts (via N-terminus) with NLRP3 (via LRR repeat domain); the interaction is direct, requires binding of NR4A1/Nur77 to NBRE-containing dsDNA and lipopolysaccharide, and leads to non-canonical NLRP3 inflammasome activation. Interacts with GADD45GIP1. Interacts with STK11. Heterodimer (via DNA-binding domain) with RXRA (via C-terminus); DNA-binding of the heterodimer is enhanced by 9-cis retinoic acid. Competes for the RXRA interaction with EP300 and thereby attenuates EP300 mediated acetylation of RXRA. Interacts with NCOA1. Interacts with NCOA2. Interacts with NCOA3. Zn(2+) serves as cofactor. In terms of processing, phosphorylated at Ser-351 by RPS6KA1 and RPS6KA3 in response to mitogenic or stress stimuli. Acetylated by p300/CBP, acetylation increases stability. Deacetylated by HDAC1.

The protein resides in the cytoplasm. The protein localises to the cytosol. Its subcellular location is the nucleus. It is found in the mitochondrion. Functionally, orphan nuclear receptor. Binds the NGFI-B response element (NBRE) 5'-AAAGGTCA-3'. Binds 9-cis-retinoic acid outside of its ligand-binding (NR LBD) domain. Participates in energy homeostasis by sequestrating the kinase STK11 in the nucleus, thereby attenuating cytoplasmic AMPK activation. Regulates the inflammatory response in macrophages by regulating metabolic adaptations during inflammation, including repressing the transcription of genes involved in the citric acid cycle (TCA). Inhibits NF-kappa-B signaling by binding to low-affinity NF-kappa-B binding sites, such as at the IL2 promoter. May act concomitantly with NR4A2 in regulating the expression of delayed-early genes during liver regeneration. Plays a role in the vascular response to injury. In the cytosol, upon its detection of both bacterial lipopolysaccharide (LPS) and NBRE-containing mitochondrial DNA released by GSDMD pores during pyroptosis, it promotes non-canonical NLRP3 inflammasome activation by stimulating association of NLRP3 and NEK7. The polypeptide is Nuclear receptor subfamily 4 group A member 1 (NR4A1) (Canis lupus familiaris (Dog)).